The sequence spans 545 residues: Hydroxylamine reductase (545 aa).

Residues Cys7, Cys10, Cys19, and Cys25 each coordinate [4Fe-4S] cluster. 8 residues coordinate hybrid [4Fe-2O-2S] cluster: His241, Glu265, Cys309, Cys400, Cys428, Cys453, Glu488, and Lys490. Cys400 is subject to Cysteine persulfide; in oxidized form.

It belongs to the HCP family. Monomer. [4Fe-4S] cluster serves as cofactor. Hybrid [4Fe-2O-2S] cluster is required as a cofactor.

The protein resides in the cytoplasm. It carries out the reaction A + NH4(+) + H2O = hydroxylamine + AH2 + H(+). Its function is as follows. Catalyzes the reduction of hydroxylamine to form NH(3) and H(2)O. The sequence is that of Hydroxylamine reductase from Desulfovibrio desulfuricans (strain ATCC 27774 / DSM 6949 / MB).